The primary structure comprises 139 residues: Early placenta insulin-like peptide (139 aa).

Positions 1–25 are cleaved as a signal peptide; it reads MASLFRSYLPAIWLLLSQLLRESLA. Cystine bridges form between Cys-31/Cys-125, Cys-43/Cys-138, and Cys-124/Cys-129. The propeptide at 59–114 is c peptide; sequence LESGRPKEMVSTSNNKDGQALGTTSEFIPNLSPELKKPLSEGQPSLKKIILSRKKR.

The protein belongs to the insulin family. In terms of tissue distribution, expressed in placenta, uterus and in fetal perichondrium. Expression levels were increased in both early placentas and molar pregnancies and were reduced in choriocarcinoma cells.

Its subcellular location is the secreted. In terms of biological role, may play an important role in trophoblast development and in the regulation of bone formation. In Homo sapiens (Human), this protein is Early placenta insulin-like peptide (INSL4).